The sequence spans 145 residues: MGMMEEFKEFAVKGNVVDLAVGVIIGGAFGKIVTSFVSDIVMPPLGLIMGKVNFTDLFINLSGKPFDSLKAAKDAGAPVISYGVFINTLIDFIIIAFVIFMVIKQINRFKKEPAPAPPNTKECPHCLSAVPIKATKCAFCTSDIK.

The next 2 helical transmembrane spans lie at 16–36 (VVDLAVGVIIGGAFGKIVTSF) and 83–103 (GVFINTLIDFIIIAFVIFMVI).

It belongs to the MscL family. As to quaternary structure, homopentamer.

It localises to the cell inner membrane. Channel that opens in response to stretch forces in the membrane lipid bilayer. May participate in the regulation of osmotic pressure changes within the cell. In Geobacter metallireducens (strain ATCC 53774 / DSM 7210 / GS-15), this protein is Large-conductance mechanosensitive channel.